The sequence spans 250 residues: Tripartite motif-containing protein 74 (250 aa).

An RING-type zinc finger spans residues 16 to 57 (CPICLEVFKESLMLQCGHSYCKGCLVSLSYHLDTKVRCPMCW). A B box-type zinc finger spans residues 84–125 (PEPKVCVHHRNPLSLFCEKDQELICGLCGLLGSHQHHPVTPV). The Zn(2+) site is built by C89, H92, C111, and H117. Coiled coils occupy residues 125 to 169 (VSTV…NESD) and 204 to 235 (LVAS…FGNE).

Belongs to the TRIM/RBCC family.

This Homo sapiens (Human) protein is Tripartite motif-containing protein 74 (TRIM74).